Consider the following 393-residue polypeptide: uncharacterized protein (393 aa).

One can recognise an OBG-type G domain in the interval 2 to 266; sequence AMIGLVGKPN…AEKAGIIKRK (265 aa). Residues 8–15 and 78–82 contribute to the GTP site; these read GKPNVGKS and DVAGL. In terms of domain architecture, TGS spans 314–390; the sequence is DMIVVYPVED…KHNDIIKIVS (77 aa).

The protein belongs to the TRAFAC class OBG-HflX-like GTPase superfamily. OBG GTPase family.

This is an uncharacterized protein from Methanocaldococcus jannaschii (strain ATCC 43067 / DSM 2661 / JAL-1 / JCM 10045 / NBRC 100440) (Methanococcus jannaschii).